The chain runs to 271 residues: uncharacterized protein (271 aa).

A signal peptide spans 1–18 (MKGFFLIAGFLLFARALC). Residues 19-187 (ASWNVEEGTL…FSPPPKRANY (169 aa)) are Lumenal-facing. Residues 188–208 (FLSICFSVSVVVSLIGLLGVW) form a helical membrane-spanning segment. The Cytoplasmic portion of the chain corresponds to 209–230 (QKLLPKSNVYSVSSSSFARTFG). The helical transmembrane segment at 231–251 (FASLAVAEILLFIYWTSLSIF) threads the bilayer. At 252 to 271 (QFGAYAAGVAIMCGIAAKSL) the chain is on the lumenal side.

It localises to the endoplasmic reticulum membrane. This is an uncharacterized protein from Schizosaccharomyces pombe (strain 972 / ATCC 24843) (Fission yeast).